Here is a 640-residue protein sequence, read N- to C-terminus: Threonine--tRNA ligase (640 aa).

Residues 1 to 61 (MPAITLPDGS…EHDAYVEIVT (61 aa)) enclose the TGS domain. The tract at residues 242-533 (DHRRLGRTQD…LIEHYGGALP (292 aa)) is catalytic. Zn(2+) contacts are provided by Cys333, His384, and His510.

This sequence belongs to the class-II aminoacyl-tRNA synthetase family. As to quaternary structure, homodimer. Zn(2+) serves as cofactor.

The protein localises to the cytoplasm. It catalyses the reaction tRNA(Thr) + L-threonine + ATP = L-threonyl-tRNA(Thr) + AMP + diphosphate + H(+). Catalyzes the attachment of threonine to tRNA(Thr) in a two-step reaction: L-threonine is first activated by ATP to form Thr-AMP and then transferred to the acceptor end of tRNA(Thr). Also edits incorrectly charged L-seryl-tRNA(Thr). The sequence is that of Threonine--tRNA ligase from Halorhodospira halophila (strain DSM 244 / SL1) (Ectothiorhodospira halophila (strain DSM 244 / SL1)).